Here is a 114-residue protein sequence, read N- to C-terminus: Small ribosomal subunit protein bS6 (114 aa).

The protein belongs to the bacterial ribosomal protein bS6 family.

Its function is as follows. Binds together with bS18 to 16S ribosomal RNA. This is Small ribosomal subunit protein bS6 from Phocaeicola vulgatus (strain ATCC 8482 / DSM 1447 / JCM 5826 / CCUG 4940 / NBRC 14291 / NCTC 11154) (Bacteroides vulgatus).